The chain runs to 75 residues: Sec-independent protein translocase protein TatA (75 aa).

The helical transmembrane segment at 1–21 threads the bilayer; sequence MGSFSIWHWLVVLAIVLLVFG. Residues 41 to 75 form a disordered region; that stretch reads KGMRDEDKPNAQLGDESRTQDASRTAQDEHDRNAR.

The protein belongs to the TatA/E family. In terms of assembly, the Tat system comprises two distinct complexes: a TatABC complex, containing multiple copies of TatA, TatB and TatC subunits, and a separate TatA complex, containing only TatA subunits. Substrates initially bind to the TatABC complex, which probably triggers association of the separate TatA complex to form the active translocon.

It is found in the cell inner membrane. In terms of biological role, part of the twin-arginine translocation (Tat) system that transports large folded proteins containing a characteristic twin-arginine motif in their signal peptide across membranes. TatA could form the protein-conducting channel of the Tat system. The polypeptide is Sec-independent protein translocase protein TatA (Stenotrophomonas maltophilia (strain K279a)).